The primary structure comprises 208 residues: Holliday junction branch migration complex subunit RuvA (208 aa).

The interval 1–63 (MIGMLTGRVE…QDAITLHGFL (63 aa)) is domain I. Residues 64–142 (DRDAKKTFLQ…LSQIEGASAQ (79 aa)) form a domain II region. A flexible linker region spans residues 143-151 (AATSKSPVD). The interval 151-208 (DTGTEQVVEGLISLGWRQQDAQQAVAEACAENDIPTPLATDDVPRVLRLALALMDRGR) is domain III.

Belongs to the RuvA family. As to quaternary structure, homotetramer. Forms an RuvA(8)-RuvB(12)-Holliday junction (HJ) complex. HJ DNA is sandwiched between 2 RuvA tetramers; dsDNA enters through RuvA and exits via RuvB. An RuvB hexamer assembles on each DNA strand where it exits the tetramer. Each RuvB hexamer is contacted by two RuvA subunits (via domain III) on 2 adjacent RuvB subunits; this complex drives branch migration. In the full resolvosome a probable DNA-RuvA(4)-RuvB(12)-RuvC(2) complex forms which resolves the HJ.

It localises to the cytoplasm. Its function is as follows. The RuvA-RuvB-RuvC complex processes Holliday junction (HJ) DNA during genetic recombination and DNA repair, while the RuvA-RuvB complex plays an important role in the rescue of blocked DNA replication forks via replication fork reversal (RFR). RuvA specifically binds to HJ cruciform DNA, conferring on it an open structure. The RuvB hexamer acts as an ATP-dependent pump, pulling dsDNA into and through the RuvAB complex. HJ branch migration allows RuvC to scan DNA until it finds its consensus sequence, where it cleaves and resolves the cruciform DNA. The chain is Holliday junction branch migration complex subunit RuvA from Bifidobacterium longum (strain DJO10A).